Here is a 417-residue protein sequence, read N- to C-terminus: UDP-N-acetylglucosamine 1-carboxyvinyltransferase (417 aa).

Lys-22–Asn-23 contributes to the phosphoenolpyruvate binding site. Arg-93 serves as a coordination point for UDP-N-acetyl-alpha-D-glucosamine. Cys-117 acts as the Proton donor in catalysis. The residue at position 117 (Cys-117) is a 2-(S-cysteinyl)pyruvic acid O-phosphothioketal. UDP-N-acetyl-alpha-D-glucosamine contacts are provided by residues Arg-122–Gln-126, Asp-305, and Ile-327.

The protein belongs to the EPSP synthase family. MurA subfamily.

The protein localises to the cytoplasm. The enzyme catalyses phosphoenolpyruvate + UDP-N-acetyl-alpha-D-glucosamine = UDP-N-acetyl-3-O-(1-carboxyvinyl)-alpha-D-glucosamine + phosphate. Its pathway is cell wall biogenesis; peptidoglycan biosynthesis. Its function is as follows. Cell wall formation. Adds enolpyruvyl to UDP-N-acetylglucosamine. The protein is UDP-N-acetylglucosamine 1-carboxyvinyltransferase of Nitrosomonas europaea (strain ATCC 19718 / CIP 103999 / KCTC 2705 / NBRC 14298).